We begin with the raw amino-acid sequence, 185 residues long: Ribosome-recycling factor (185 aa).

Belongs to the RRF family.

It is found in the cytoplasm. In terms of biological role, responsible for the release of ribosomes from messenger RNA at the termination of protein biosynthesis. May increase the efficiency of translation by recycling ribosomes from one round of translation to another. The chain is Ribosome-recycling factor from Arthrobacter sp. (strain FB24).